Here is a 594-residue protein sequence, read N- to C-terminus: F-box/LRR-repeat protein At3g58980 (594 aa).

The 49-residue stretch at 1–49 (MDRISNLPNEIICHIVSFLSAKEAAFASILSKRWRNLFTIVIKLQFDDS) folds into the F-box domain. 15 LRR repeats span residues 103–125 (ILDLKLDICAGRRYSLPLEVFTC), 128–151 (LVKLELGSDFGGFVVDLVPEDAFL), 152–174 (PALETLLLNYIRFKDLRRCAFEK), 203–218 (SPTLERLTISHVDLYE), 219–242 (CEFTRINLDTPNLTYLELSDAVPD), 249–272 (LDSLVEVKLDLTLMVDHKYHGYVD), 288–314 (LRNVEIMNLQSPNTFQAFSYFHEAIPV), 315–339 (FKNLYHLTITNNDTVIGFCWEFLPF), 344–369 (CPNLKTLVIDGPLHYNEDRPKSVCHC), 403–414 (LEKLSGLKLVKL), 415–437 (HSLTRFGSDKKKLLMLPRASSKC), 450–474 (LPSLKTLILDSVKFYDRCGCCAFQK), 503–518 (SQTLERLTIDHRYWAE), 519–541 (HNLESFTFDTPSLTYLDYNAHVP), and 584–594 (LRNVEILRLWM).

This is F-box/LRR-repeat protein At3g58980 from Arabidopsis thaliana (Mouse-ear cress).